The chain runs to 637 residues: Chaperone protein HtpG (637 aa).

Positions 1–335 are a; substrate-binding; the sequence is MQGTVNSERL…SSDLPLNISR (335 aa). A b region spans residues 336–559; sequence ETLQNNKIIE…DGSMDIRMER (224 aa). Residues 560–637 are c; that stretch reads FLREQKQLNY…RMNSVLSQIN (78 aa).

It belongs to the heat shock protein 90 family. As to quaternary structure, homodimer.

It is found in the cytoplasm. In terms of biological role, molecular chaperone. Has ATPase activity. The polypeptide is Chaperone protein HtpG (Ehrlichia ruminantium (strain Gardel)).